The sequence spans 292 residues: Ribosomal protein L11 methyltransferase (292 aa).

S-adenosyl-L-methionine is bound by residues T138, G159, D181, and N225.

Belongs to the methyltransferase superfamily. PrmA family.

It localises to the cytoplasm. The catalysed reaction is L-lysyl-[protein] + 3 S-adenosyl-L-methionine = N(6),N(6),N(6)-trimethyl-L-lysyl-[protein] + 3 S-adenosyl-L-homocysteine + 3 H(+). Functionally, methylates ribosomal protein L11. This Leuconostoc citreum (strain KM20) protein is Ribosomal protein L11 methyltransferase.